The sequence spans 115 residues: Colicin-Ib immunity protein (115 aa).

3 consecutive transmembrane segments (helical) span residues 7–27 (VKYL…FYLG), 38–58 (FYAF…MRII), and 87–107 (IFEL…LIFI).

The protein resides in the cell membrane. Functionally, this protein is able to protect a cell, which harbors the plasmid IncI1 ColIb-P9 encoding colicin Ib, against colicin Ib. The polypeptide is Colicin-Ib immunity protein (Escherichia coli).